The following is a 208-amino-acid chain: Uracil phosphoribosyltransferase (208 aa).

Residues Arg77, Arg102, and 129-137 (DPMLATGNS) contribute to the 5-phospho-alpha-D-ribose 1-diphosphate site. Residues Ile193 and 198–200 (GDA) contribute to the uracil site. Residue Asp199 coordinates 5-phospho-alpha-D-ribose 1-diphosphate.

Belongs to the UPRTase family. Requires Mg(2+) as cofactor.

The enzyme catalyses UMP + diphosphate = 5-phospho-alpha-D-ribose 1-diphosphate + uracil. It participates in pyrimidine metabolism; UMP biosynthesis via salvage pathway; UMP from uracil: step 1/1. Its activity is regulated as follows. Allosterically activated by GTP. Catalyzes the conversion of uracil and 5-phospho-alpha-D-ribose 1-diphosphate (PRPP) to UMP and diphosphate. This Mycoplasmopsis agalactiae (strain NCTC 10123 / CIP 59.7 / PG2) (Mycoplasma agalactiae) protein is Uracil phosphoribosyltransferase.